The sequence spans 311 residues: 4-hydroxyproline 2-epimerase (311 aa).

Cys88 serves as the catalytic Proton acceptor. Residues 89–90 (GH), His208, and Asp232 each bind substrate. Cys236 acts as the Proton donor in catalysis. Residue 237-238 (GT) coordinates substrate.

Belongs to the proline racemase family.

The catalysed reaction is trans-4-hydroxy-L-proline = cis-4-hydroxy-D-proline. In terms of biological role, catalyzes the epimerization of trans-4-hydroxy-L-proline (t4LHyp) to cis-4-hydroxy-D-proline (c4DHyp). Is likely involved in a degradation pathway that converts t4LHyp to alpha-ketoglutarate. Displays no proline racemase activity. The sequence is that of 4-hydroxyproline 2-epimerase from Chromohalobacter salexigens (strain ATCC BAA-138 / DSM 3043 / CIP 106854 / NCIMB 13768 / 1H11).